Consider the following 306-residue polypeptide: Small ribosomal subunit protein uS2 (306 aa).

Residue serine 2 is modified to N-acetylserine. Laminin-binding regions lie at residues 161 to 180 (IPCN…MLAR) and 205 to 229 (RDPE…EFQG). [DE]-W-[ST] repeat units follow at residues 230 to 232 (EWT), 245 to 247 (DWS), 276 to 278 (DWS), 286 to 288 (DWS), and 304 to 306 (EWS). The interval 242 to 306 (EVADWSEGVQ…EWTGTTTEWS (65 aa)) is laminin-binding. The tract at residues 247–306 (SEGVQVPSVPIQQFTAERTDVPPAPKPTEDWSTQPASTDDWSAAPTAQASEWTGTTTEWS) is disordered. Residues 276-306 (DWSTQPASTDDWSAAPTAQASEWTGTTTEWS) show a composition bias toward polar residues.

Belongs to the universal ribosomal protein uS2 family. Monomer (37LRP) and homodimer (67LR). Component of the small ribosomal subunit. Mature ribosomes consist of a small (40S) and a large (60S) subunit. The 40S subunit contains about 33 different proteins and 1 molecule of RNA (18S). The 60S subunit contains about 49 different proteins and 3 molecules of RNA (28S, 5.8S and 5S). Interacts with rps21. Interacts with several laminins including at least lamb1. Interacts with mdk. Acylated. Acylation may be a prerequisite for conversion of the monomeric 37 kDa laminin receptor precursor (37LRP) to the mature dimeric 67 kDa laminin receptor (67LR), and may provide a mechanism for membrane association. In terms of processing, cleaved by stromelysin-3 (ST3) at the cell surface. Cleavage by stromelysin-3 may be a mechanism to alter cell-extracellular matrix interactions.

It is found in the cell membrane. Its subcellular location is the cytoplasm. It localises to the nucleus. Its function is as follows. Required for the assembly and/or stability of the 40S ribosomal subunit. Required for the processing of the 20S rRNA-precursor to mature 18S rRNA in a late step of the maturation of 40S ribosomal subunits. Also functions as a cell surface receptor for laminin. Plays a role in cell adhesion to the basement membrane and in the consequent activation of signaling transduction pathways. May play a role in cell fate determination and tissue morphogenesis. The polypeptide is Small ribosomal subunit protein uS2 (rpsa) (Xenopus laevis (African clawed frog)).